The chain runs to 398 residues: Cytochrome b (398 aa).

Residues 45-65 (LGSIAGIALVIQIITGVILAM) form a helical membrane-spanning segment. Heme b-binding residues include His95 and His109. The next 9 membrane-spanning stretches (helical) occupy residues 96–116 (AVGA…GLYY), 129–149 (IGII…VLPW), 164–184 (FSAI…GFSV), 192–212 (FFSL…LHLV), 245–265 (FVGF…EPNY), 277–297 (PLVT…YAIL), 304–324 (LGGV…PWLD), 339–359 (MAFW…GQPA), and 366–386 (ISRF…PLIG). 2 residues coordinate heme b: His196 and His210.

Belongs to the cytochrome b family. The main subunits of complex b-c1 are: cytochrome b, cytochrome c1 and the Rieske protein. Heme b serves as cofactor.

The protein resides in the cell membrane. Its function is as follows. Component of the ubiquinol-cytochrome c reductase complex (complex III or cytochrome b-c1 complex), which is a respiratory chain that generates an electrochemical potential coupled to ATP synthesis. This is Cytochrome b (petB) from Rickettsia conorii (strain ATCC VR-613 / Malish 7).